The following is a 308-amino-acid chain: Hydroxyacylglutathione hydrolase, mitochondrial (308 aa).

A mitochondrion-targeting transit peptide spans 1-13; sequence MVVGRGLLGRRSL. Positions 102, 104, 106, and 107 each coordinate Zn(2+). An N6-acetyllysine modification is found at lysine 116. Zn(2+) contacts are provided by histidine 158 and aspartate 182. Residues 191-193 and 221-223 contribute to the substrate site; these read KFY and HEY. Histidine 221 contributes to the Zn(2+) binding site. Lysine 229 is subject to N6-acetyllysine; alternate. At lysine 229 the chain carries N6-succinyllysine; alternate. 297-300 is a substrate binding site; it reads RREK.

The protein belongs to the metallo-beta-lactamase superfamily. Glyoxalase II family. Monomer. Zn(2+) serves as cofactor. As to expression, expressed in liver and kidney.

The protein localises to the mitochondrion matrix. It localises to the cytoplasm. The enzyme catalyses an S-(2-hydroxyacyl)glutathione + H2O = a 2-hydroxy carboxylate + glutathione + H(+). It catalyses the reaction (R)-S-lactoylglutathione + H2O = (R)-lactate + glutathione + H(+). It participates in secondary metabolite metabolism; methylglyoxal degradation; (R)-lactate from methylglyoxal: step 2/2. Its function is as follows. Thiolesterase that catalyzes the hydrolysis of S-D-lactoyl-glutathione to form glutathione and D-lactic acid. The chain is Hydroxyacylglutathione hydrolase, mitochondrial (HAGH) from Homo sapiens (Human).